The sequence spans 293 residues: Vibriobactin-specific isochorismatase (293 aa).

Positions 211 to 287 (KLTGLSLRTM…QWWQTIQANL (77 aa)) constitute a Carrier domain. An O-(pantetheine 4'-phosphoryl)serine modification is found at Ser248.

The protein belongs to the isochorismatase family. Pantetheine 4'-phosphate is required as a cofactor.

It catalyses the reaction isochorismate + H2O = (2S,3S)-2,3-dihydroxy-2,3-dihydrobenzoate + pyruvate. It functions in the pathway siderophore biosynthesis; vibriobactin biosynthesis. In terms of biological role, involved in the biosynthesis of the catechol siderophore vibriobactin. Vibriobactin is a chelating compound involved in transporting iron from the bacterial environment into the cell cytoplasm. This Vibrio cholerae serotype O1 (strain ATCC 39541 / Classical Ogawa 395 / O395) protein is Vibriobactin-specific isochorismatase (vibB).